The following is a 352-amino-acid chain: Cyclin-dependent kinase 7 (352 aa).

Positions 18 to 301 constitute a Protein kinase domain; that stretch reads YEKLDFLGEG…ASQALRKRYF (284 aa). ATP-binding positions include 24–32 and K47; that span reads LGEGQFATV. D143 (proton acceptor) is an active-site residue. S170 bears the Phosphoserine; by CDK1 and CDK2 mark. Residue T176 is modified to Phosphothreonine; by CDK2.

Belongs to the protein kinase superfamily. CMGC Ser/Thr protein kinase family. CDC2/CDKX subfamily. Probably associates with cyclin-H (ccnh) and mat1 to form a multimeric active enzyme. Phosphorylation of Ser-170 during mitosis inactivates the enzyme. Phosphorylation of Thr-176 is required for activity. Phosphorylated at Ser-170 and Thr-176 by CDK2.

The protein resides in the nucleus. The enzyme catalyses L-seryl-[protein] + ATP = O-phospho-L-seryl-[protein] + ADP + H(+). It catalyses the reaction L-threonyl-[protein] + ATP = O-phospho-L-threonyl-[protein] + ADP + H(+). It carries out the reaction [DNA-directed RNA polymerase] + ATP = phospho-[DNA-directed RNA polymerase] + ADP + H(+). Phosphorylation at Thr-176 is required for enzymatic activity. In terms of biological role, serine/threonine kinase involved in cell cycle control and in RNA polymerase II-mediated RNA transcription. Cyclin-dependent kinases (CDKs) are activated by the binding to a cyclin and mediate the progression through the cell cycle. Each different complex controls a specific transition between 2 subsequent phases in the cell cycle. Required for both activation and complex formation of cdk1/cyclin-B during G2-M transition, and for activation of cdk2/cyclins during G1-S transition (but not complex formation). cdk7 is the catalytic subunit of the CDK-activating kinase (CAK) complex. CAK activates the cyclin-associated kinases cdk1, cdk2, cdk4 and cdk6 by threonine phosphorylation, thus regulating cell cycle progression. Initiates transcription by RNA polymerase II by mediating phosphorylation of polr2a at 'Ser-5' of the repetitive C-terminal domain (CTD) when polr2a is in complex with DNA, promoting dissociation from DNA and initiation. CAK complexed to the core-TFIIH basal transcription factor activates RNA polymerase II by serine phosphorylation of the CTD of polr2a, allowing its escape from the promoter and elongation of the transcripts. The polypeptide is Cyclin-dependent kinase 7 (cdk7) (Xenopus laevis (African clawed frog)).